The sequence spans 451 residues: Lysine histidine transporter-like 3 (451 aa).

The Cytoplasmic portion of the chain corresponds to 1 to 40 (MKGIPSSSNQILNQDLVEDQSFELEDWLPITASRNANWYY). A helical membrane pass occupies residues 41-61 (SAFHNVTAIVGAGVLGLPYAM). Residues 62 to 63 (SE) are Extracellular-facing. The helical transmembrane segment at 64 to 84 (LGWGPGVVVLILSWVITLYTF) threads the bilayer. The Cytoplasmic segment spans residues 85 to 115 (WQMIEMHEMFEGKRFDRYHELGQAAFGKKLG). The helical transmembrane segment at 116 to 136 (LYIVVPLQLLVETSACIVYMV) threads the bilayer. Topologically, residues 137–159 (TGGESLKKIHQLSVGDYECRKLK) are extracellular. The chain crosses the membrane as a helical span at residues 160-177 (VRHFILIFASSQFVLSLL). Residues 178–182 (KNFNS) lie on the Cytoplasmic side of the membrane. Residues 183-203 (ISGVSLVAAVMSMSYSTIAWV) traverse the membrane as a helical segment. Residues 204 to 227 (ASLTKGVANNVEYGYKRRNNTSVP) lie on the Extracellular side of the membrane. Residues 228-248 (LAFLGALGEMAFAYAGHNVVL) traverse the membrane as a helical segment. Residues 249-269 (EIQATIPSTPENPSKRPMWKG) are Cytoplasmic-facing. A helical membrane pass occupies residues 270 to 290 (AIVAYIIVAFCYFPVALVGFW). Residues 291-309 (TFGNNVEENILKTLRGPKG) lie on the Extracellular side of the membrane. A helical membrane pass occupies residues 310 to 330 (LIIVANIFVIIHLMGSYQVYA). At 331 to 358 (MPVFDMIESVMIKKWHFSPTRVLRFTIR) the chain is on the cytoplasmic side. A helical transmembrane segment spans residues 359–379 (WTFVAATMGIAVALPHFSALL). Position 380 (serine 380) is a topological domain, extracellular. Residues 381 to 401 (FFGGFIFAPTTYFIPCIIWLI) traverse the membrane as a helical segment. The Cytoplasmic portion of the chain corresponds to 402–413 (LKKPKRFSLSWC). A helical transmembrane segment spans residues 414–434 (INWICIILGVLVMIIAPIGGL). Over 435–451 (AKLMNALKQPDSSCKST) the chain is Extracellular.

Belongs to the amino acid/polyamine transporter 2 family. Amino acid/auxin permease (AAAP) (TC 2.A.18.2) subfamily.

Its subcellular location is the cell membrane. Functionally, amino acid transporter. The protein is Lysine histidine transporter-like 3 of Arabidopsis thaliana (Mouse-ear cress).